The sequence spans 558 residues: 2-hydroxy-7-methoxy-5-methyl-1-naphthoate--CoA ligase (558 aa).

ATP-binding positions include 212–213 (GG), 329–331 (ASR), Val351, Asp435, Arg450, and Lys542.

It belongs to the ATP-dependent AMP-binding enzyme family.

The enzyme catalyses 2-hydroxy-7-methoxy-5-methyl-1-naphthoate + ATP + CoA = 2-hydroxy-7-methoxy-5-methyl-1-naphthoyl-CoA + AMP + diphosphate. It participates in antibiotic biosynthesis. Catalyzes the activation of 2-hydroxy-7-methoxy-5-methyl-1-naphthoate in the biosynthesis of the naphthoate moiety of the neocarzinostatin chromophore. Also catalyzes the activation of other 1-naphthoic acid analogs such as 2-hydroxy-5-methyl-1-naphthoate or 2,7-dihydroxy-5-methyl-1-naphthoate in vitro. This is 2-hydroxy-7-methoxy-5-methyl-1-naphthoate--CoA ligase from Streptomyces carzinostaticus.